We begin with the raw amino-acid sequence, 535 residues long: Putative transcription activator BRLF1 homolog (535 aa).

The tract at residues 384–426 (KTNFPLKRKRQSRNIDPNTPRRPRGRPKGSKTKKRPTCSPALF) is disordered. The segment covering 404-419 (RRPRGRPKGSKTKKRP) has biased composition (basic residues).

This sequence belongs to the herpesviridae TAF50 family.

In terms of biological role, transcription activation. Regulates the delayed-early 110 kDa promoter. The sequence is that of Putative transcription activator BRLF1 homolog (50) from Saimiriine herpesvirus 2 (strain 11) (SaHV-2).